A 1238-amino-acid chain; its full sequence is Multifunctional 2-oxoglutarate metabolism enzyme (1238 aa).

The tract at residues 1 to 41 (MANISSPFGQNEWLVEEMYRKFRDDPSSVDPSWHEFLVDYN) is 2-oxoglutarate dehydrogenase E1, N-terminal part. A disordered region spans residues 40–108 (YNPESTQEAT…APAPPPAEGD (69 aa)). A linker region spans residues 42 to 94 (PESTQEATEPAVVKPAAAPAKPAPAPAPAKPAAGPPAAGNGSPAAAPSAKPAA). 2 stretches are compositionally biased toward low complexity: residues 51 to 61 (PAVVKPAAAPA) and 71 to 98 (KPAA…APAK). Positions 95–343 (APAKAPAPPP…LRTIHQMLLA (249 aa)) are succinyltransferase E2. His-322 (proton acceptor; for succinyltransferase activity) is an active-site residue. Residues 344–1238 (DEFWDEIFRE…QQEILDTAFG (895 aa)) are 2-oxoglutarate dehydrogenase E1, C-terminal part. Residue Arg-549 participates in thiamine diphosphate binding. Residues His-588 and Ser-613 each coordinate 2-oxoglutarate. The thiamine diphosphate site is built by Ser-613, Leu-615, Asp-656, Ala-657, Ala-658, and Asn-689. Position 656 (Asp-656) interacts with Mg(2+). Mg(2+) is bound by residues Asn-689 and Ile-691. Residues 794–824 (DISIKEAEDALRDYQGQLEQVFNEVRELEKH) adopt a coiled-coil conformation. A 2-oxoglutarate-binding site is contributed by His-1031. 7 residues coordinate acetyl-CoA: Thr-1049, Arg-1065, Lys-1100, Ser-1103, Gln-1153, Arg-1160, and Arg-1161.

Belongs to the 2-oxoacid dehydrogenase family. Kgd subfamily. Homodimer. The 2-oxoglutarate dehydrogenase (ODH) complex contains multiple copies of three enzymatic components: 2-oxoglutarate dehydrogenase (E1), dihydrolipoamide succinyltransferase (E2) and lipoamide dehydrogenase (E3). The cofactor is Mg(2+). Thiamine diphosphate is required as a cofactor.

The enzyme catalyses glyoxylate + 2-oxoglutarate + H(+) = 2-hydroxy-3-oxoadipate + CO2. It carries out the reaction 2-oxoglutarate + H(+) = succinate semialdehyde + CO2. It catalyses the reaction N(6)-[(R)-lipoyl]-L-lysyl-[protein] + 2-oxoglutarate + H(+) = N(6)-[(R)-S(8)-succinyldihydrolipoyl]-L-lysyl-[protein] + CO2. The catalysed reaction is N(6)-[(R)-dihydrolipoyl]-L-lysyl-[protein] + succinyl-CoA = N(6)-[(R)-S(8)-succinyldihydrolipoyl]-L-lysyl-[protein] + CoA. The protein operates within carbohydrate metabolism; tricarboxylic acid cycle; succinate from 2-oxoglutarate (transferase route): step 1/2. Its pathway is carbohydrate metabolism; tricarboxylic acid cycle; succinyl-CoA from 2-oxoglutarate (dehydrogenase route): step 1/1. With respect to regulation, alpha-ketoglutarate dehydrogenase and decarboxylase activities are inhibited by unphosphorylated GarA, and allosterically activated by acetyl-CoA, the main substrate of the TCA cycle. Its function is as follows. Shows three enzymatic activities that share a first common step, the attack of thiamine-PP on 2-oxoglutarate (alpha-ketoglutarate, KG), leading to the formation of an enamine-thiamine-PP intermediate upon decarboxylation. Thus, displays KGD activity, catalyzing the decarboxylation from five-carbon 2-oxoglutarate to four-carbon succinate semialdehyde (SSA). Also catalyzes C-C bond formation between the activated aldehyde formed after decarboxylation of alpha-ketoglutarate and the carbonyl of glyoxylate (GLX), to yield 2-hydroxy-3-oxoadipate (HOA), which spontaneously decarboxylates to form 5-hydroxylevulinate (HLA). And is also a component of the 2-oxoglutarate dehydrogenase (ODH) complex, that catalyzes the overall conversion of 2-oxoglutarate to succinyl-CoA and CO(2). The KG decarboxylase and KG dehydrogenase reactions provide two alternative, tightly regulated, pathways connecting the oxidative and reductive branches of the TCA cycle. This chain is Multifunctional 2-oxoglutarate metabolism enzyme (kgd), found in Mycobacterium ulcerans (strain Agy99).